The primary structure comprises 150 residues: Snaclec rhinocetin subunit beta (150 aa).

The N-terminal stretch at 1–23 (MGRFIFLSSGLLVVFLSLSGTGA) is a signal peptide. 3 disulfide bridges follow: Cys-27-Cys-38, Cys-55-Cys-144, and Cys-121-Cys-136. A C-type lectin domain is found at 34 to 145 (YEGYCYKVFK…CNRQQYFVCK (112 aa)).

The protein belongs to the snaclec family. Heterodimer; disulfide-linked. Expressed by the venom gland.

It is found in the secreted. Antagonist of the alpha-2 subunit of the integrin alpha-2/beta-1 (ITGA2/ITGB1) on human platelets and endothelial cells. This protein inhibits collagen-stimulated activation of human platelets in a dose-dependent manner. In addition, it antagonizes the binding of monoclonal antibodies against the alpha-2 subunit of integrin alpha-2/beta-1 to platelets and it coimmunoprecipitates with this integrin. In Bitis rhinoceros (West African gaboon viper), this protein is Snaclec rhinocetin subunit beta.